A 170-amino-acid polypeptide reads, in one-letter code: Transcription factor E (170 aa).

The region spanning 1–93 (MKEAYLYIVE…TWYVDDDVIR (93 aa)) is the HTH TFE/IIEalpha-type domain.

Belongs to the TFE family. As to quaternary structure, monomer. Interaction with RNA polymerase subunits RpoF and RpoE is necessary for Tfe stimulatory transcription activity. Able to interact with Tbp and RNA polymerase in the absence of DNA promoter. Interacts both with the preinitiation and elongation complexes.

Its function is as follows. Transcription factor that plays a role in the activation of archaeal genes transcribed by RNA polymerase. Facilitates transcription initiation by enhancing TATA-box recognition by TATA-box-binding protein (Tbp), and transcription factor B (Tfb) and RNA polymerase recruitment. Not absolutely required for transcription in vitro, but particularly important in cases where Tbp or Tfb function is not optimal. It dynamically alters the nucleic acid-binding properties of RNA polymerases by stabilizing the initiation complex and destabilizing elongation complexes. Seems to translocate with the RNA polymerase following initiation and acts by binding to the non template strand of the transcription bubble in elongation complexes. This is Transcription factor E from Pyrobaculum neutrophilum (strain DSM 2338 / JCM 9278 / NBRC 100436 / V24Sta) (Thermoproteus neutrophilus).